Consider the following 215-residue polypeptide: uncharacterized protein (215 aa).

Positions 53, 74, and 97 each coordinate S-adenosyl-L-methionine.

It belongs to the methyltransferase superfamily. YrrT family.

Functionally, could be a S-adenosyl-L-methionine-dependent methyltransferase. This is an uncharacterized protein from Geobacillus kaustophilus (strain HTA426).